The primary structure comprises 578 residues: Putative diflavin flavoprotein A 2 (578 aa).

Residues 48 to 240 (RHGTTYNSFL…LQVVLVATGH (193 aa)) are zinc metallo-hydrolase. 6 residues coordinate Fe cation: His97, Glu99, Asp101, His164, Asp183, and His240. The Flavodoxin-like domain occupies 269 to 406 (VALFYVDGYG…LCREAGTDLG (138 aa)). The flavodoxin-reductase-like stretch occupies residues 429-578 (IGRLSTGLYI…THHRKLGNHY (150 aa)).

This sequence in the N-terminal section; belongs to the zinc metallo-hydrolase group 3 family. It in the C-terminal section; belongs to the flavodoxin reductase family. Requires Fe cation as cofactor.

Mediates electron transfer from NADH to oxygen, reducing it to water. This modular protein has 3 redox cofactors, in other organisms the same activity requires 2 or 3 proteins. The polypeptide is Putative diflavin flavoprotein A 2 (dfa2) (Synechocystis sp. (strain ATCC 27184 / PCC 6803 / Kazusa)).